Here is a 449-residue protein sequence, read N- to C-terminus: MSTALVILAAGKGTRMNSDLPKVLHQIAHAPMLEHAMRAGGALDPERTVVVAGHEAEMVRAATAEIAPEATVVLQEEQLGTGHAVLQARAALEGFRGDVVVLYGDTPFVSAETLERMIEARSRADLVILGFEAADPARYGRLIMQGESLEKIVEFKDASDAERAITFCNSGLMACNAEVMFGLLDQVGNDNASGEYYLTDLVELARAEGLSVTAVSCPEAETLGINSRADLAAAEAVFQAHARAELLDIGVTLTAPETVHLAFDTIIGRDTVIEPNVVFGPGVTVESGALIRAFSHLEGCHVSRGAKVGPYARLRPGAELAEDTHVGNFVEIKNAEIAAGAKVNHLTYIGDASVGEATNIGAGTITCNYDGVMKHRTEIGARAFIGSNTCLVAPVTVGDEAMTATGAVITKDVADGDLAIARVQQTNKPGRARKLMDMLRAKKAAKAKG.

The segment at 1 to 228 (MSTALVILAA…EAETLGINSR (228 aa)) is pyrophosphorylase. Residues 8–11 (LAAG), Lys-22, Gln-75, 80–81 (GT), 103–105 (YGD), Gly-140, Glu-154, Asn-169, and Asn-226 each bind UDP-N-acetyl-alpha-D-glucosamine. Asp-105 is a binding site for Mg(2+). Residue Asn-226 coordinates Mg(2+). The interval 229-249 (ADLAAAEAVFQAHARAELLDI) is linker. Positions 250 to 449 (GVTLTAPETV…RAKKAAKAKG (200 aa)) are N-acetyltransferase. Positions 315 and 333 each coordinate UDP-N-acetyl-alpha-D-glucosamine. The active-site Proton acceptor is His-345. UDP-N-acetyl-alpha-D-glucosamine-binding residues include Tyr-348 and Asn-359. Acetyl-CoA contacts are provided by residues Ala-362, 368–369 (NY), Ser-387, Thr-405, and Arg-422.

This sequence in the N-terminal section; belongs to the N-acetylglucosamine-1-phosphate uridyltransferase family. In the C-terminal section; belongs to the transferase hexapeptide repeat family. Homotrimer. Mg(2+) is required as a cofactor.

It is found in the cytoplasm. It carries out the reaction alpha-D-glucosamine 1-phosphate + acetyl-CoA = N-acetyl-alpha-D-glucosamine 1-phosphate + CoA + H(+). The catalysed reaction is N-acetyl-alpha-D-glucosamine 1-phosphate + UTP + H(+) = UDP-N-acetyl-alpha-D-glucosamine + diphosphate. Its pathway is nucleotide-sugar biosynthesis; UDP-N-acetyl-alpha-D-glucosamine biosynthesis; N-acetyl-alpha-D-glucosamine 1-phosphate from alpha-D-glucosamine 6-phosphate (route II): step 2/2. It participates in nucleotide-sugar biosynthesis; UDP-N-acetyl-alpha-D-glucosamine biosynthesis; UDP-N-acetyl-alpha-D-glucosamine from N-acetyl-alpha-D-glucosamine 1-phosphate: step 1/1. The protein operates within bacterial outer membrane biogenesis; LPS lipid A biosynthesis. Catalyzes the last two sequential reactions in the de novo biosynthetic pathway for UDP-N-acetylglucosamine (UDP-GlcNAc). The C-terminal domain catalyzes the transfer of acetyl group from acetyl coenzyme A to glucosamine-1-phosphate (GlcN-1-P) to produce N-acetylglucosamine-1-phosphate (GlcNAc-1-P), which is converted into UDP-GlcNAc by the transfer of uridine 5-monophosphate (from uridine 5-triphosphate), a reaction catalyzed by the N-terminal domain. The sequence is that of Bifunctional protein GlmU from Ruegeria sp. (strain TM1040) (Silicibacter sp.).